A 60-amino-acid polypeptide reads, in one-letter code: Small ribosomal subunit protein bS21 (60 aa).

The disordered stretch occupies residues 35–60 (REHYEKPSVKRKKKSEAARRRKSKVR). Over residues 43-60 (VKRKKKSEAARRRKSKVR) the composition is skewed to basic residues.

Belongs to the bacterial ribosomal protein bS21 family.

This chain is Small ribosomal subunit protein bS21, found in Clostridium novyi (strain NT).